A 316-amino-acid polypeptide reads, in one-letter code: Transaldolase (316 aa).

Lys127 functions as the Schiff-base intermediate with substrate in the catalytic mechanism.

This sequence belongs to the transaldolase family. Type 2 subfamily.

It localises to the cytoplasm. The enzyme catalyses D-sedoheptulose 7-phosphate + D-glyceraldehyde 3-phosphate = D-erythrose 4-phosphate + beta-D-fructose 6-phosphate. It participates in carbohydrate degradation; pentose phosphate pathway; D-glyceraldehyde 3-phosphate and beta-D-fructose 6-phosphate from D-ribose 5-phosphate and D-xylulose 5-phosphate (non-oxidative stage): step 2/3. Its function is as follows. Transaldolase is important for the balance of metabolites in the pentose-phosphate pathway. The protein is Transaldolase of Helicobacter pylori (strain Shi470).